The chain runs to 1050 residues: Nuclear pore complex-interacting protein family member B3 (1050 aa).

The chain crosses the membrane as a helical span at residues 63–87 (VIIAFPTSYKVVITLWIVYLWVSLL). Disordered stretches follow at residues 241–262 (NRMG…NSLS), 290–574 (LTPL…NIKT), and 785–1050 (ERLR…RRLS). A compositionally biased stretch (polar residues) spans 252–262 (QQHSITDNSLS). Residues 349-359 (PLPPSALPSAP) are compositionally biased toward pro residues. Basic and acidic residues-rich tracts occupy residues 406–416 (DNIKTPAERLR), 448–458 (DNIKTPAERLR), 490–500 (DNIKTPAERLR), 528–538 (DNIKTPAERLR), 820–830 (DNIKTPAERLR), 862–872 (DNIKTPAERLR), and 904–914 (DNIKTPAERLR).

The protein belongs to the NPIP family.

Its subcellular location is the membrane. The polypeptide is Nuclear pore complex-interacting protein family member B3 (NPIPB3) (Homo sapiens (Human)).